Reading from the N-terminus, the 450-residue chain is UDP-N-acetylmuramoylalanine--D-glutamate ligase (450 aa).

Residue 119–125 (GSNGKTT) participates in ATP binding.

The protein belongs to the MurCDEF family.

The protein localises to the cytoplasm. The enzyme catalyses UDP-N-acetyl-alpha-D-muramoyl-L-alanine + D-glutamate + ATP = UDP-N-acetyl-alpha-D-muramoyl-L-alanyl-D-glutamate + ADP + phosphate + H(+). The protein operates within cell wall biogenesis; peptidoglycan biosynthesis. Cell wall formation. Catalyzes the addition of glutamate to the nucleotide precursor UDP-N-acetylmuramoyl-L-alanine (UMA). In Bacillus cereus (strain Q1), this protein is UDP-N-acetylmuramoylalanine--D-glutamate ligase.